A 394-amino-acid chain; its full sequence is Elongation factor Tu (394 aa).

One can recognise a tr-type G domain in the interval 10-204 (KPHVNVGTIG…HLDNYIPEPE (195 aa)). The interval 19–26 (GHVDHGKT) is G1. A GTP-binding site is contributed by 19 to 26 (GHVDHGKT). Threonine 26 is a binding site for Mg(2+). A G2 region spans residues 60–64 (GITIN). The tract at residues 81–84 (DCPG) is G3. Residues 81-85 (DCPGH) and 136-139 (NKCD) each bind GTP. Residues 136–139 (NKCD) are G4. The interval 174-176 (SAL) is G5.

It belongs to the TRAFAC class translation factor GTPase superfamily. Classic translation factor GTPase family. EF-Tu/EF-1A subfamily. In terms of assembly, monomer.

The protein resides in the cytoplasm. The catalysed reaction is GTP + H2O = GDP + phosphate + H(+). In terms of biological role, GTP hydrolase that promotes the GTP-dependent binding of aminoacyl-tRNA to the A-site of ribosomes during protein biosynthesis. The protein is Elongation factor Tu of Histophilus somni (strain 129Pt) (Haemophilus somnus).